Reading from the N-terminus, the 520-residue chain is Peptide chain release factor 3 (520 aa).

The 270-residue stretch at 8–277 folds into the tr-type G domain; it reads ESRKTFAIIS…HAPMPNARQT (270 aa). Residues 17–24, 85–89, and 139–142 each bind GTP; these read SHPDAGKT, DTPGH, and NKLD.

It belongs to the TRAFAC class translation factor GTPase superfamily. Classic translation factor GTPase family. PrfC subfamily.

It localises to the cytoplasm. Its function is as follows. Increases the formation of ribosomal termination complexes and stimulates activities of RF-1 and RF-2. It binds guanine nucleotides and has strong preference for UGA stop codons. It may interact directly with the ribosome. The stimulation of RF-1 and RF-2 is significantly reduced by GTP and GDP, but not by GMP. The chain is Peptide chain release factor 3 from Staphylococcus epidermidis (strain ATCC 35984 / DSM 28319 / BCRC 17069 / CCUG 31568 / BM 3577 / RP62A).